A 147-amino-acid polypeptide reads, in one-letter code: Methylglyoxal synthase (147 aa).

The MGS-like domain maps to 4–147 (VSVPATKRIA…LLNFELLCES (144 aa)). Substrate contacts are provided by residues histidine 17, lysine 21, 43 to 46 (TGTT), and 63 to 64 (SG). The active-site Proton donor/acceptor is aspartate 69. A substrate-binding site is contributed by histidine 96.

Belongs to the methylglyoxal synthase family.

It catalyses the reaction dihydroxyacetone phosphate = methylglyoxal + phosphate. In terms of biological role, catalyzes the formation of methylglyoxal from dihydroxyacetone phosphate. This chain is Methylglyoxal synthase, found in Leptospira borgpetersenii serovar Hardjo-bovis (strain JB197).